A 180-amino-acid polypeptide reads, in one-letter code: ATP-dependent protease subunit HslV (180 aa).

Residue threonine 7 is part of the active site. Alanine 165, cysteine 168, and threonine 171 together coordinate Na(+).

This sequence belongs to the peptidase T1B family. HslV subfamily. As to quaternary structure, a double ring-shaped homohexamer of HslV is capped on each side by a ring-shaped HslU homohexamer. The assembly of the HslU/HslV complex is dependent on binding of ATP.

The protein resides in the cytoplasm. The enzyme catalyses ATP-dependent cleavage of peptide bonds with broad specificity.. With respect to regulation, allosterically activated by HslU binding. Its function is as follows. Protease subunit of a proteasome-like degradation complex believed to be a general protein degrading machinery. This chain is ATP-dependent protease subunit HslV, found in Geobacillus sp. (strain WCH70).